The chain runs to 522 residues: Glucose-1-phosphate adenylyltransferase large subunit 1, chloroplastic (522 aa).

The N-terminal 54 residues, M1–R54, are a transit peptide targeting the chloroplast. The residue at position 428 (S428) is a Phosphoserine.

Belongs to the bacterial/plant glucose-1-phosphate adenylyltransferase family. Heterotetramer. In terms of tissue distribution, leaves.

It localises to the plastid. It is found in the chloroplast. It catalyses the reaction alpha-D-glucose 1-phosphate + ATP + H(+) = ADP-alpha-D-glucose + diphosphate. It participates in glycan biosynthesis; starch biosynthesis. Its activity is regulated as follows. Activated by 3'phosphoglycerate, inhibited by orthophosphate. Allosteric regulation. This protein plays a role in synthesis of starch. It catalyzes the synthesis of the activated glycosyl donor, ADP-glucose from Glc-1-P and ATP. This is Glucose-1-phosphate adenylyltransferase large subunit 1, chloroplastic (ADG2) from Arabidopsis thaliana (Mouse-ear cress).